A 187-amino-acid polypeptide reads, in one-letter code: Elongation factor P (187 aa).

Belongs to the elongation factor P family.

The protein resides in the cytoplasm. It functions in the pathway protein biosynthesis; polypeptide chain elongation. In terms of biological role, involved in peptide bond synthesis. Stimulates efficient translation and peptide-bond synthesis on native or reconstituted 70S ribosomes in vitro. Probably functions indirectly by altering the affinity of the ribosome for aminoacyl-tRNA, thus increasing their reactivity as acceptors for peptidyl transferase. This is Elongation factor P from Rhodococcus jostii (strain RHA1).